The primary structure comprises 54 residues: Ductus ejaculatorius peptide 99B (54 aa).

The first 21 residues, 1–21, serve as a signal peptide directing secretion; that stretch reads MKTPLFLLLVVLASLLGLALS. Gln22 is subject to Pyrrolidone carboxylic acid. The N-linked (GlcNAc...) asparagine glycan is linked to Asn25. Cysteines 40 and 52 form a disulfide. A propeptide spanning residues 53–54 is cleaved from the precursor; the sequence is RK.

It to paragonial peptide B. Ductus ejaculatorius.

The protein localises to the secreted. Induces post-mating responses; increased oviposition and reduced receptivity. This chain is Ductus ejaculatorius peptide 99B (Dup99B), found in Drosophila melanogaster (Fruit fly).